Here is a 623-residue protein sequence, read N- to C-terminus: Serine/threonine-protein kinase MAK (623 aa).

The Protein kinase domain occupies 4-284; it reads YTTMRQLGDG…ASQALKHPYF (281 aa). ATP-binding positions include 10-18 and lysine 33; that span reads LGDGTYGSV. Aspartate 125 serves as the catalytic Proton acceptor. Residue threonine 157 is modified to Phosphothreonine; by autocatalysis. Position 159 is a phosphotyrosine; by autocatalysis (tyrosine 159). Disordered stretches follow at residues 328-396 and 416-469; these read IDQV…RRRW and GASH…SDSE. Residues 356–369 show a composition bias toward low complexity; it reads QQPPKQQSQEKPPQ. A compositionally biased stretch (polar residues) spans 446 to 455; that stretch reads SGSNHSTGEN.

This sequence belongs to the protein kinase superfamily. CMGC Ser/Thr protein kinase family. CDC2/CDKX subfamily. Interacts with RP1. Interacts with AR and CDK20. Found in a complex containing MAK, AR and NCOA3. Interacts with FZR1 (via WD repeats). Mg(2+) is required as a cofactor. Post-translationally, autophosphorylated. Phosphorylated on serine and threonine residues. In terms of tissue distribution, expressed in prostate cancer cell lines at generally higher levels than in normal prostate epithelial cell lines. Isoform 1 is expressed in kidney, testis, lung, trachea, and retina. Isoform 2 is retina-specific where it is expressed in rod and cone photoreceptors.

It is found in the nucleus. The protein localises to the cytoplasm. Its subcellular location is the cytoskeleton. The protein resides in the microtubule organizing center. It localises to the centrosome. It is found in the spindle. The protein localises to the midbody. Its subcellular location is the cell projection. The protein resides in the cilium. It localises to the photoreceptor outer segment. It is found in the photoreceptor inner segment. The catalysed reaction is L-seryl-[protein] + ATP = O-phospho-L-seryl-[protein] + ADP + H(+). It carries out the reaction L-threonyl-[protein] + ATP = O-phospho-L-threonyl-[protein] + ADP + H(+). Functionally, essential for the regulation of ciliary length and required for the long-term survival of photoreceptors. Phosphorylates FZR1 in a cell cycle-dependent manner. Plays a role in the transcriptional coactivation of AR. Could play an important function in spermatogenesis. May play a role in chromosomal stability in prostate cancer cells. This chain is Serine/threonine-protein kinase MAK (MAK), found in Homo sapiens (Human).